A 940-amino-acid chain; its full sequence is Isoleucine--tRNA ligase (940 aa).

Positions 58 to 68 (PYANGDIHIGH) match the 'HIGH' region motif. Position 564 (glutamate 564) interacts with L-isoleucyl-5'-AMP. The 'KMSKS' region motif lies at 605–609 (KMSKS). Lysine 608 lines the ATP pocket. The Zn(2+) site is built by cysteine 903, cysteine 906, cysteine 923, and cysteine 926.

The protein belongs to the class-I aminoacyl-tRNA synthetase family. IleS type 1 subfamily. Monomer. Zn(2+) serves as cofactor.

It localises to the cytoplasm. The enzyme catalyses tRNA(Ile) + L-isoleucine + ATP = L-isoleucyl-tRNA(Ile) + AMP + diphosphate. Catalyzes the attachment of isoleucine to tRNA(Ile). As IleRS can inadvertently accommodate and process structurally similar amino acids such as valine, to avoid such errors it has two additional distinct tRNA(Ile)-dependent editing activities. One activity is designated as 'pretransfer' editing and involves the hydrolysis of activated Val-AMP. The other activity is designated 'posttransfer' editing and involves deacylation of mischarged Val-tRNA(Ile). This is Isoleucine--tRNA ligase from Shewanella piezotolerans (strain WP3 / JCM 13877).